The chain runs to 223 residues: Deoxyribose-phosphate aldolase (223 aa).

Asp92 acts as the Proton donor/acceptor in catalysis. Lys154 acts as the Schiff-base intermediate with acetaldehyde in catalysis. Lys182 functions as the Proton donor/acceptor in the catalytic mechanism.

This sequence belongs to the DeoC/FbaB aldolase family. DeoC type 1 subfamily.

The protein resides in the cytoplasm. It carries out the reaction 2-deoxy-D-ribose 5-phosphate = D-glyceraldehyde 3-phosphate + acetaldehyde. It functions in the pathway carbohydrate degradation; 2-deoxy-D-ribose 1-phosphate degradation; D-glyceraldehyde 3-phosphate and acetaldehyde from 2-deoxy-alpha-D-ribose 1-phosphate: step 2/2. Functionally, catalyzes a reversible aldol reaction between acetaldehyde and D-glyceraldehyde 3-phosphate to generate 2-deoxy-D-ribose 5-phosphate. The sequence is that of Deoxyribose-phosphate aldolase from Haemophilus influenzae (strain 86-028NP).